Consider the following 101-residue polypeptide: Urease subunit beta (101 aa).

It belongs to the urease beta subunit family. Heterotrimer of UreA (gamma), UreB (beta) and UreC (alpha) subunits. Three heterotrimers associate to form the active enzyme.

It localises to the cytoplasm. The catalysed reaction is urea + 2 H2O + H(+) = hydrogencarbonate + 2 NH4(+). It functions in the pathway nitrogen metabolism; urea degradation; CO(2) and NH(3) from urea (urease route): step 1/1. This chain is Urease subunit beta, found in Azotobacter vinelandii (strain DJ / ATCC BAA-1303).